The following is a 387-amino-acid chain: uncharacterized protein (387 aa).

The chain crosses the membrane as a helical span at residues F5–T25.

This sequence belongs to the LicD transferase family.

It is found in the membrane. This is an uncharacterized protein from Caenorhabditis elegans.